Reading from the N-terminus, the 431-residue chain is 5-methylthioadenosine/S-adenosylhomocysteine deaminase (431 aa).

The Zn(2+) site is built by H68 and H70. Substrate is bound by residues E97 and H186. H213 is a binding site for Zn(2+). Residues E216 and D301 each coordinate substrate. D301 contacts Zn(2+).

It belongs to the metallo-dependent hydrolases superfamily. MTA/SAH deaminase family. Requires Zn(2+) as cofactor.

It catalyses the reaction S-adenosyl-L-homocysteine + H2O + H(+) = S-inosyl-L-homocysteine + NH4(+). The enzyme catalyses S-methyl-5'-thioadenosine + H2O + H(+) = S-methyl-5'-thioinosine + NH4(+). Catalyzes the deamination of 5-methylthioadenosine and S-adenosyl-L-homocysteine into 5-methylthioinosine and S-inosyl-L-homocysteine, respectively. Is also able to deaminate adenosine. In Halothermothrix orenii (strain H 168 / OCM 544 / DSM 9562), this protein is 5-methylthioadenosine/S-adenosylhomocysteine deaminase.